The sequence spans 194 residues: dITP/XTP pyrophosphatase (194 aa).

11–16 (SHNAGK) lines the substrate pocket. Residue Asp70 is the Proton acceptor of the active site. Asp70 contacts Mg(2+). Substrate-binding positions include Ser71, 149–152 (FGYD), Lys172, and 177–178 (HR).

This sequence belongs to the HAM1 NTPase family. In terms of assembly, homodimer. Requires Mg(2+) as cofactor.

It carries out the reaction XTP + H2O = XMP + diphosphate + H(+). The catalysed reaction is dITP + H2O = dIMP + diphosphate + H(+). It catalyses the reaction ITP + H2O = IMP + diphosphate + H(+). Its function is as follows. Pyrophosphatase that catalyzes the hydrolysis of nucleoside triphosphates to their monophosphate derivatives, with a high preference for the non-canonical purine nucleotides XTP (xanthosine triphosphate), dITP (deoxyinosine triphosphate) and ITP. Seems to function as a house-cleaning enzyme that removes non-canonical purine nucleotides from the nucleotide pool, thus preventing their incorporation into DNA/RNA and avoiding chromosomal lesions. This is dITP/XTP pyrophosphatase from Thermosynechococcus vestitus (strain NIES-2133 / IAM M-273 / BP-1).